Here is a 142-residue protein sequence, read N- to C-terminus: Negative cofactor 2 complex subunit alpha (142 aa).

Residues 1–11 (MADQVPVTTQL) show a composition bias toward polar residues. Positions 1-43 (MADQVPVTTQLPPIKPEHEVPLDAGGSPVGNMGTNSNNNNELG) are disordered. S27 carries the post-translational modification Phosphoserine. A Histone-fold domain is found at 29–137 (VGNMGTNSNN…LCVEEGQTQP (109 aa)). S141 is subject to Phosphoserine.

It belongs to the NC2 alpha/DRAP1 family. Component of the NC2 (negative cofactor 2) complex composed of BUR6 and NCB2. The NC2 complex associates with SPT15/TBP. Interacts with SPT15/TBP.

The protein localises to the nucleus. Component of the NC2 complex which represses RNA polymerase II transcription through binding to SPT15/TBP and thereby inhibiting the assembly of the preinitiation complex. The NC2 complex may also mediate transcriptional activation from TATA-driven promoters through association with SPT15/TBP. In Saccharomyces cerevisiae (strain ATCC 204508 / S288c) (Baker's yeast), this protein is Negative cofactor 2 complex subunit alpha (BUR6).